The chain runs to 118 residues: Small ribosomal subunit protein uS13 (118 aa).

The tract at residues 94–118 is disordered; the sequence is SLPVRGQRTKTNARTRKGPRKAIKK.

Belongs to the universal ribosomal protein uS13 family. Part of the 30S ribosomal subunit. Forms a loose heterodimer with protein S19. Forms two bridges to the 50S subunit in the 70S ribosome.

In terms of biological role, located at the top of the head of the 30S subunit, it contacts several helices of the 16S rRNA. In the 70S ribosome it contacts the 23S rRNA (bridge B1a) and protein L5 of the 50S subunit (bridge B1b), connecting the 2 subunits; these bridges are implicated in subunit movement. Contacts the tRNAs in the A and P-sites. The polypeptide is Small ribosomal subunit protein uS13 (Aeromonas hydrophila subsp. hydrophila (strain ATCC 7966 / DSM 30187 / BCRC 13018 / CCUG 14551 / JCM 1027 / KCTC 2358 / NCIMB 9240 / NCTC 8049)).